The primary structure comprises 304 residues: Acetyl-coenzyme A carboxylase carboxyl transferase subunit beta (304 aa).

One can recognise a CoA carboxyltransferase N-terminal domain in the interval 23 to 292; sequence VWTKCDSCGQ…PNPDAPREGV (270 aa). 4 residues coordinate Zn(2+): Cys-27, Cys-30, Cys-46, and Cys-49. The C4-type zinc-finger motif lies at 27–49; that stretch reads CDSCGQVLYRAELERNLEVCPKC. Residues 284–304 are disordered; sequence NPDAPREGVVVPPAPDQESEV.

Belongs to the AccD/PCCB family. As to quaternary structure, acetyl-CoA carboxylase is a heterohexamer composed of biotin carboxyl carrier protein (AccB), biotin carboxylase (AccC) and two subunits each of ACCase subunit alpha (AccA) and ACCase subunit beta (AccD). The cofactor is Zn(2+).

It is found in the cytoplasm. The enzyme catalyses N(6)-carboxybiotinyl-L-lysyl-[protein] + acetyl-CoA = N(6)-biotinyl-L-lysyl-[protein] + malonyl-CoA. It participates in lipid metabolism; malonyl-CoA biosynthesis; malonyl-CoA from acetyl-CoA: step 1/1. Its function is as follows. Component of the acetyl coenzyme A carboxylase (ACC) complex. Biotin carboxylase (BC) catalyzes the carboxylation of biotin on its carrier protein (BCCP) and then the CO(2) group is transferred by the transcarboxylase to acetyl-CoA to form malonyl-CoA. This chain is Acetyl-coenzyme A carboxylase carboxyl transferase subunit beta, found in Salmonella paratyphi A (strain ATCC 9150 / SARB42).